A 781-amino-acid polypeptide reads, in one-letter code: Catalase-peroxidase (781 aa).

An N-terminal signal peptide occupies residues 1 to 20 (MLYIYYLFKSLFFHTLFVFS). Residues 125 to 272 (WHSAGTYRIG…LAAVQMGLIY (148 aa)) constitute a cross-link (tryptophyl-tyrosyl-methioninium (Trp-Tyr) (with M-298)). Histidine 126 serves as the catalytic Proton acceptor. Positions 237-256 (VHHPDEHRGAKEKAAKNSDS) are disordered. The tryptophyl-tyrosyl-methioninium (Tyr-Met) (with W-125) cross-link spans 272–298 (YVNPEGPDGRPDPLASARDIRETFARM). Histidine 313 contributes to the heme b binding site. The tract at residues 317–336 (KTHGAAPADNVGPEPEAGEL) is disordered.

The protein belongs to the peroxidase family. Peroxidase/catalase subfamily. Homodimer or homotetramer. Heme b serves as cofactor. Post-translationally, formation of the three residue Trp-Tyr-Met cross-link is important for the catalase, but not the peroxidase activity of the enzyme.

The catalysed reaction is H2O2 + AH2 = A + 2 H2O. The enzyme catalyses 2 H2O2 = O2 + 2 H2O. Its function is as follows. Bifunctional enzyme with both catalase and broad-spectrum peroxidase activity. This is Catalase-peroxidase from Xylella fastidiosa (strain 9a5c).